We begin with the raw amino-acid sequence, 345 residues long: Prenyltransferase ltmC (345 aa).

His112 serves as a coordination point for substrate. Residues Asp119 and Asp123 each contribute to the Mg(2+) site. Arg128 is a binding site for substrate. An N-linked (GlcNAc...) asparagine glycan is attached at Asn130. Residues Lys212, Thr213, Gln243, Asn250, and Lys260 each coordinate substrate.

This sequence belongs to the FPP/GGPP synthase family. Mg(2+) is required as a cofactor.

The protein operates within secondary metabolite biosynthesis. Prenyltransferase; part of the gene cluster that mediates the biosynthesis of lolitrems, indole-diterpene mycotoxins that are potent tremorgens in mammals, and are synthesized by clavicipitaceous fungal endophytes in association with their grass hosts. The geranylgeranyl diphosphate (GGPP) synthase ltmG is proposed to catalyze the first step in lolitrem biosynthesis. LtmG catalyzes a series of iterative condensations of isopentenyl diphosphate (IPP) with dimethylallyl diphosphate (DMAPP), geranyl diphosphate (GPP), and farnesyl diphosphate (FPP), to form GGPP. GGPP then condenses with indole-3-glycerol phosphate to form 3-geranylgeranylindole, an acyclic intermediate, to be incorporated into paxilline. Either ltmG or ltmC could be responsible for this step, as both are putative prenyl transferases. The FAD-dependent monooxygenase ltmM then catalyzes the epoxidation of the two terminal alkenes of the geranylgeranyl moiety, which is subsequently cyclized by ltmB, to paspaline. The cytochrome P450 monooxygenases ltmQ and ltmP can sequentially oxidize paspaline to terpendole E and terpendole F. Alternatively, ltmP converts paspaline to an intermediate which is oxidized by ltmQ to terpendole F. LtmF, ltmK, ltmE and ltmJ appear to be unique to the epichloe endophytes. The prenyltransferase ltmF is involved in the 27-hydroxyl-O-prenylation. The cytochrome P450 monooxygenase ltmK is required for the oxidative acetal ring formation. The multi-functional prenyltransferase ltmE is required for C20- and C21-prenylations of the indole ring of paspalanes and acts together with the cytochrome P450 monooxygenase ltmJ to yield lolitremanes by multiple oxidations and ring closures. The stereoisomer pairs of lolitriol and lolitrem N or lolitrem B and lolitrem F may be attributed to variations in the way in which ring closure can occur under the action of ltmJ. While the major product of this pathway is lolitrem B, the prenyl transferases and cytochrome P450 monooxygenases identified in this pathway have a remarkable versatility in their regio- and stereo-specificities to generate a diverse range of metabolites that are products of a metabolic grid rather than a linear pathway. In Epichloe festucae var. lolii (Neotyphodium lolii), this protein is Prenyltransferase ltmC.